We begin with the raw amino-acid sequence, 435 residues long: Putative acid phosphatase F26C11.1 (435 aa).

H38 acts as the Nucleophile in catalysis. D317 serves as the catalytic Proton donor. C382 and C388 are oxidised to a cystine.

It belongs to the histidine acid phosphatase family.

It carries out the reaction a phosphate monoester + H2O = an alcohol + phosphate. The sequence is that of Putative acid phosphatase F26C11.1 from Caenorhabditis elegans.